A 1074-amino-acid polypeptide reads, in one-letter code: DNA helicase B (1074 aa).

Disordered regions lie at residues Met-1–Phe-38, Gly-380–Ser-420, and Gly-932–Glu-1014. Residues Asp-20–Phe-38 are compositionally biased toward acidic residues. Positions Cys-934–Ser-946 are enriched in polar residues. Phosphoserine is present on residues Ser-942 and Ser-946. A Phosphothreonine modification is found at Thr-992. Residues Ser-1015 and Ser-1026 each carry the phosphoserine modification. The short motif at Val-1022 to Leu-1046 is the Nuclear export signal element. Positions Thr-1040–Met-1074 are disordered.

The protein belongs to the RecD family. HELB subfamily. In terms of assembly, binds to RPA1; this interaction promotes HELB recruitment to chromatin following DNA damage. Interacts with at least two subunits of the DNA polymerase alpha complex. Interacts with CDC45. Interacts with TOPB1. Post-translationally, phosphorylated at Ser-942 by CDK2 during the G1/S transition, resulting in its nuclear export into the cytoplasm. As S phase progresses, its exclusion from the nucleus promotes the activation of long-range resection.

It is found in the nucleus. The protein resides in the cytoplasm. It localises to the chromosome. It carries out the reaction ATP + H2O = ADP + phosphate + H(+). Its function is as follows. 5'-3' DNA helicase involved in DNA damage response by acting as an inhibitor of DNA end resection. Recruitment to single-stranded DNA (ssDNA) following DNA damage leads to inhibit the nucleases catalyzing resection, such as EXO1, BLM and DNA2, possibly via the 5'-3' ssDNA translocase activity of HELB. As cells approach S phase, DNA end resection is promoted by the nuclear export of HELB following phosphorylation. Acts independently of TP53BP1. Unwinds duplex DNA with 5'-3' polarity. Has single-strand DNA-dependent ATPase and DNA helicase activities. Prefers ATP and dATP as substrates. During S phase, may facilitate cellular recovery from replication stress. The protein is DNA helicase B of Mus musculus (Mouse).